Reading from the N-terminus, the 274-residue chain is MQGTPAKKHTHGWQASLALQFCHTPEKTVLHSARHVGPLTVQRPFYPEEETCHLYLLHPPGGIVGGDELNISVQLDPNSHALITMPGAGKFYRSSGPLARLNQHFFLEENATLEWLPQDTIFFPGANAVLQSVFHLHHSSRLLAWELFCLGRPVINETFSHGTIESRLEVWLDDEPLLIERQHLADGDLTTVANHPWIGTLLCYPASDALLEGVREKLVTLDNFAGATLTDGLLSIRFLSHDNLICQRAMREIWQCLRPHVIAKTPHPPRIWQT.

This sequence belongs to the UreD family. As to quaternary structure, ureD, UreF and UreG form a complex that acts as a GTP-hydrolysis-dependent molecular chaperone, activating the urease apoprotein by helping to assemble the nickel containing metallocenter of UreC. The UreE protein probably delivers the nickel.

It is found in the cytoplasm. Its function is as follows. Required for maturation of urease via the functional incorporation of the urease nickel metallocenter. In Enterobacter sp. (strain 638), this protein is Urease accessory protein UreD.